The following is a 373-amino-acid chain: Glutamine synthetase (373 aa).

Ala2 carries the N-acetylalanine modification. The tract at residues 2–25 (ATSASSHLNKGIKQVYMSLPQGEK) is required for glutamine-induced ubiquitination by CRL4(CRBN) and proteasomal degradation. N6-acetyllysine occurs at positions 11 and 14. Residues 24–106 (EKVQAMYIWI…VFCEVFKYNR (83 aa)) enclose the GS beta-grasp domain. At Tyr104 the chain carries Phosphotyrosine. The region spanning 113–373 (LRHTCKRIMD…TGDEPFQYKN (261 aa)) is the GS catalytic domain. Residue Glu134 participates in ATP binding. Mn(2+) is bound by residues Glu134, Glu136, Glu196, and Glu203. ATP is bound at residue 203–208 (EFQIGP). 246–247 (NW) lines the L-glutamate pocket. Position 253 (His253) interacts with Mn(2+). Residues 255-257 (NFS), Arg319, and Arg324 contribute to the ATP site. Arg319 serves as a coordination point for L-glutamate. 336–338 (YFE) serves as a coordination point for ADP. Glu338 lines the Mn(2+) pocket. Arg340 serves as a coordination point for L-glutamate. Ser343 carries the post-translational modification Phosphoserine.

Belongs to the glutamine synthetase family. As to quaternary structure, decamer; composed of two pentamers. Interacts with PALMD. Interacts with RHOJ. Interacts with BEST2; this interaction tethers a fraction of GLUL to the membrane, causing a decrease of cytosolic glutamine synthase (GS) activity and inhibits the chloride channel activity of BEST2 by affecting the gating at the aperture in the absence of intracellular glutamate. Requires Mg(2+) as cofactor. It depends on Mn(2+) as a cofactor. In terms of processing, palmitoylated; undergoes autopalmitoylation. Acetylated by EP300/p300; acetylation is stimulated by increased glutamine levels and promotes ubiquitin-mediated proteasomal degradation. Post-translationally, ubiquitinated by ZNRF1. Ubiquitinated by the DCX (DDB1-CUL4-X-box) E3 ubiquitin-protein ligase complex called CRL4(CRBN), leading to proteasomal degradation.

The protein resides in the cytoplasm. Its subcellular location is the cytosol. It localises to the microsome. It is found in the mitochondrion. The protein localises to the cell membrane. It catalyses the reaction L-glutamate + NH4(+) + ATP = L-glutamine + ADP + phosphate + H(+). The enzyme catalyses L-cysteinyl-[protein] + hexadecanoyl-CoA = S-hexadecanoyl-L-cysteinyl-[protein] + CoA. Its activity is regulated as follows. Glutamine synthetase activity is inhibited by methionine sulfoximine (MSO). Its function is as follows. Glutamine synthetase that catalyzes the ATP-dependent conversion of glutamate and ammonia to glutamine. Its role depends on tissue localization: in the brain, it regulates the levels of toxic ammonia and converts neurotoxic glutamate to harmless glutamine, whereas in the liver, it is one of the enzymes responsible for the removal of ammonia. Plays a key role in ammonium detoxification during erythropoiesis: the glutamine synthetase activity is required to remove ammonium generated by porphobilinogen deaminase (HMBS) during heme biosynthesis to prevent ammonium accumulation and oxidative stress. Essential for proliferation of fetal skin fibroblasts. Independently of its glutamine synthetase activity, required for endothelial cell migration during vascular development. Involved in angiogenesis by regulating membrane localization and activation of the GTPase RHOJ, possibly by promoting RHOJ palmitoylation. May act as a palmitoyltransferase for RHOJ: able to autopalmitoylate and then transfer the palmitoyl group to RHOJ. Plays a role in ribosomal 40S subunit biogenesis. Through the interaction with BEST2, inhibits BEST2 channel activity by affecting the gating at the aperture in the absence of intracellular L-glutamate, but sensitizes BEST2 to intracellular L-glutamate, which promotes the opening of BEST2 and thus relieves its inhibitory effect on BEST2. This chain is Glutamine synthetase, found in Canis lupus familiaris (Dog).